A 320-amino-acid polypeptide reads, in one-letter code: Ubiquitin-like domain-containing CTD phosphatase 1 (320 aa).

One can recognise a Ubiquitin-like domain in the interval 6 to 77 (VVVIVKWSGK…LKPNFKLMMV (72 aa)). Positions 136 to 296 (PREGKKLLVL…LKLSDYLRKI (161 aa)) constitute an FCP1 homology domain. Mg(2+) is bound by residues Asp-146, Asp-148, and Asp-255.

It depends on Mg(2+) as a cofactor.

The protein localises to the nucleus. It catalyses the reaction O-phospho-L-seryl-[protein] + H2O = L-seryl-[protein] + phosphate. The enzyme catalyses O-phospho-L-threonyl-[protein] + H2O = L-threonyl-[protein] + phosphate. Functionally, dephosphorylates 26S nuclear proteasomes, thereby decreasing their proteolytic activity. Recruited to the 19S regulatory particle of the 26S proteasome where it dephosphorylates 19S component Rpt1 which impairs Rpt1 ATPase activity and disrupts 26S proteasome assembly. The polypeptide is Ubiquitin-like domain-containing CTD phosphatase 1 (Drosophila melanogaster (Fruit fly)).